The following is a 171-amino-acid chain: 3-hydroxydecanoyl-[acyl-carrier-protein] dehydratase (171 aa).

The active site involves His-71.

Belongs to the thioester dehydratase family. FabA subfamily. Homodimer.

It is found in the cytoplasm. The catalysed reaction is a (3R)-hydroxyacyl-[ACP] = a (2E)-enoyl-[ACP] + H2O. It catalyses the reaction (3R)-hydroxydecanoyl-[ACP] = (2E)-decenoyl-[ACP] + H2O. It carries out the reaction (2E)-decenoyl-[ACP] = (3Z)-decenoyl-[ACP]. It functions in the pathway lipid metabolism; fatty acid biosynthesis. In terms of biological role, necessary for the introduction of cis unsaturation into fatty acids. Catalyzes the dehydration of (3R)-3-hydroxydecanoyl-ACP to E-(2)-decenoyl-ACP and then its isomerization to Z-(3)-decenoyl-ACP. Can catalyze the dehydratase reaction for beta-hydroxyacyl-ACPs with saturated chain lengths up to 16:0, being most active on intermediate chain length. The chain is 3-hydroxydecanoyl-[acyl-carrier-protein] dehydratase from Sinorhizobium medicae (strain WSM419) (Ensifer medicae).